The sequence spans 80 residues: CLAVATA3/ESR (CLE)-related protein 4 (80 aa).

An N-terminal signal peptide occupies residues 1 to 22; the sequence is MASFKLWVCLILLLLEFSVHQC. The segment at 55–80 is disordered; it reads SKDGQTVLGTLDSKRLSPGGPDPRHH. Residues proline 72 and proline 75 each carry the hydroxyproline modification. O-linked (Ara...) hydroxyproline glycosylation occurs at proline 75.

It belongs to the CLV3/ESR signal peptide family. In terms of processing, the O-glycosylation (arabinosylation) of the hydroxyproline Pro-75 enhances binding affinity of the CLE4p peptide for its receptor. Expressed in roots and seedlings.

The protein localises to the secreted. Its subcellular location is the extracellular space. In terms of biological role, extracellular signal peptide that regulates cell fate. In Arabidopsis thaliana (Mouse-ear cress), this protein is CLAVATA3/ESR (CLE)-related protein 4.